Here is a 139-residue protein sequence, read N- to C-terminus: MSISGVVKLGKPSKKAIFSMTDSALKRVKEIMNDKKIDNCIGLRLGIKERGCSGMSYTLDFATQKNKFDETVVADKDINIIVDSKALLSVIGTEMDYIEEPIKKEFIFINPNATNTCGCGESFTTKDFSIPDLKLPKKN.

The Fe cation site is built by C52, C117, and C119.

Belongs to the HesB/IscA family.

Its subcellular location is the mitochondrion. Functionally, involved in the assembly of mitochondrial iron-sulfur proteins. Probably involved in the binding of an intermediate of Fe/S cluster assembly. The polypeptide is Iron-sulfur cluster assembly 1 homolog, mitochondrial (isca1) (Dictyostelium discoideum (Social amoeba)).